The following is a 353-amino-acid chain: Photosystem II D2 protein (353 aa).

The residue at position 2 (Thr-2) is an N-acetylthreonine. Residue Thr-2 is modified to Phosphothreonine. Residues 41 to 61 (CAYFALGGWFTGTTFVTSWYT) traverse the membrane as a helical segment. His-118 contacts chlorophyll a. The chain crosses the membrane as a helical span at residues 125–141 (GFMLRQFELARSVQLRP). Pheophytin a-binding residues include Gln-130 and Asn-143. A helical transmembrane segment spans residues 153 to 166 (VFVSVFLIYPLGQS). His-198 serves as a coordination point for chlorophyll a. Residues 208–228 (AALLCAIHGATVENTLFEDGD) traverse the membrane as a helical segment. 2 residues coordinate a plastoquinone: His-215 and Phe-262. A Fe cation-binding site is contributed by His-215. His-269 contacts Fe cation. A helical transmembrane segment spans residues 279 to 295 (GLWMSALGVVGLALNLR).

This sequence belongs to the reaction center PufL/M/PsbA/D family. In terms of assembly, PSII is composed of 1 copy each of membrane proteins PsbA, PsbB, PsbC, PsbD, PsbE, PsbF, PsbH, PsbI, PsbJ, PsbK, PsbL, PsbM, PsbT, PsbX, PsbY, PsbZ, Psb30/Ycf12, at least 3 peripheral proteins of the oxygen-evolving complex and a large number of cofactors. It forms dimeric complexes. The cofactor is The D1/D2 heterodimer binds P680, chlorophylls that are the primary electron donor of PSII, and subsequent electron acceptors. It shares a non-heme iron and each subunit binds pheophytin, quinone, additional chlorophylls, carotenoids and lipids. There is also a Cl(-1) ion associated with D1 and D2, which is required for oxygen evolution. The PSII complex binds additional chlorophylls, carotenoids and specific lipids..

The protein resides in the plastid. It localises to the chloroplast thylakoid membrane. The enzyme catalyses 2 a plastoquinone + 4 hnu + 2 H2O = 2 a plastoquinol + O2. Photosystem II (PSII) is a light-driven water:plastoquinone oxidoreductase that uses light energy to abstract electrons from H(2)O, generating O(2) and a proton gradient subsequently used for ATP formation. It consists of a core antenna complex that captures photons, and an electron transfer chain that converts photonic excitation into a charge separation. The D1/D2 (PsbA/PsbD) reaction center heterodimer binds P680, the primary electron donor of PSII as well as several subsequent electron acceptors. D2 is needed for assembly of a stable PSII complex. This Dioscorea elephantipes (Elephant's foot yam) protein is Photosystem II D2 protein.